The sequence spans 34 residues: MSDIN-like toxin proprotein 7 (34 aa).

The propeptide occupies 1–10; that stretch reads MSDINATRLP. Positions 11-17 form a cross-link, cyclopeptide (Ala-Pro); that stretch reads AWLTDCP. Positions 18-34 are excised as a propeptide; sequence CVGDDVNRLLTRGESLC.

Belongs to the MSDIN fungal toxin family. In terms of processing, processed by the macrocyclase-peptidase enzyme POPB to yield a toxic cyclic heptapeptide. POPB first removes 10 residues from the N-terminus. Conformational trapping of the remaining peptide forces the enzyme to release this intermediate rather than proceed to macrocyclization. The enzyme rebinds the remaining peptide in a different conformation and catalyzes macrocyclization of the N-terminal 7 residues. Expressed in basidiocarps.

In terms of biological role, probable toxin that belongs to the MSDIN-like toxin family responsible for a large number of food poisoning cases and deaths. The sequence is that of MSDIN-like toxin proprotein 7 from Amanita exitialis (Guangzhou destroying angel).